The chain runs to 867 residues: Transcription factor E2F8 (867 aa).

Positions 38–58 (DFGPLTTPTKPKEGSQGEPWT) are disordered. Residues S71 and S102 each carry the phosphoserine modification. 2 DNA-binding regions span residues 113 to 182 (RKEK…TWHG) and 261 to 347 (RKDK…KWTG). 3 disordered regions span residues 408-432 (RRKI…NSAP), 532-616 (QSVT…SGSK), and 771-800 (APEN…GQSV). Phosphoserine occurs at positions 413 and 417. Polar residues-rich tracts occupy residues 413–432 (SAPS…NSAP) and 532–556 (QSVT…TGSK). Basic and acidic residues predominate over residues 557 to 567 (DSTDATTEKAA). A compositionally biased stretch (polar residues) spans 568 to 579 (NDTSKASASTRP). Positions 594–604 (RTREPAGERGS) are enriched in basic and acidic residues. Polar residues predominate over residues 775 to 800 (AGTQQGRATNYDSPVPGQSQPNGQSV).

It belongs to the E2F/DP family. Homodimer and heterodimer: mainly forms homodimers and, to a lesser extent, heterodimers with E2F8. Dimerization is important for DNA-binding. Interacts with HIF1A.

It localises to the nucleus. Functionally, atypical E2F transcription factor that participates in various processes such as angiogenesis and polyploidization of specialized cells. Mainly acts as a transcription repressor that binds DNA independently of DP proteins and specifically recognizes the E2 recognition site 5'-TTTC[CG]CGC-3'. Directly represses transcription of classical E2F transcription factors such as E2F1: component of a feedback loop in S phase by repressing the expression of E2F1, thereby preventing p53/TP53-dependent apoptosis. Plays a key role in polyploidization of cells in placenta and liver by regulating the endocycle, probably by repressing genes promoting cytokinesis and antagonizing action of classical E2F proteins (E2F1, E2F2 and/or E2F3). Required for placental development by promoting polyploidization of trophoblast giant cells. Acts as a promoter of sprouting angiogenesis, possibly by acting as a transcription activator: associates with HIF1A, recognizes and binds the VEGFA promoter, which is different from canonical E2 recognition site, and activates expression of the VEGFA gene. The sequence is that of Transcription factor E2F8 (E2F8) from Homo sapiens (Human).